The primary structure comprises 332 residues: 30 kDa heat shock protein (332 aa).

The Extracellular portion of the chain corresponds to 1–34; that stretch reads MNDTLSSFLNRNEALGLNPPHGLDMHITKRGSDW. Residues 35 to 55 traverse the membrane as a helical segment; the sequence is LWAVFAVFGFILLCYVVMFFI. Residues 56-65 lie on the Cytoplasmic side of the membrane; sequence AENKGSRLTR. A helical membrane pass occupies residues 66–86; the sequence is YALAPAFLITFFEFFAFFTYA. Over 87 to 121 the chain is Extracellular; the sequence is SDLGWTGVQAEFNHVKVSKSITGEVPGIRQIFYSK. Residues 122 to 142 traverse the membrane as a helical segment; it reads YIAWFLSWPCLLFLIELAAST. Residues 143-157 are Cytoplasmic-facing; the sequence is TGENDDISALDMVHS. A helical membrane pass occupies residues 158–178; that stretch reads LLIQIVGTLFWVVSLLVGSLI. The Extracellular portion of the chain corresponds to 179–181; the sequence is KST. A helical transmembrane segment spans residues 182-202; that stretch reads YKWGYYTIGAVAMLVTQGVIC. The Cytoplasmic segment spans residues 203–215; it reads QRQFFNLKTRGFN. Residues 216–236 form a helical membrane-spanning segment; it reads ALMLCTCMVIVWLYFICWGLS. Residues 237–248 lie on the Extracellular side of the membrane; that stretch reads DGGNRIQPDGEA. The chain crosses the membrane as a helical span at residues 249–269; it reads IFYGVLDLCVFAIYPCYLLIA. The Cytoplasmic segment spans residues 270–332; that stretch reads VSRDGKLPRL…EAEQAVEDTA (63 aa). Residues 290 to 332 form a disordered region; that stretch reads ATDDVEDAAPETKEAVPESPRASGETAIHEPEPEAEQAVEDTA. Position 308 is a phosphoserine (Ser-308). Positions 322–332 are enriched in acidic residues; sequence PEAEQAVEDTA. Thr-331 carries the post-translational modification Phosphothreonine.

This sequence belongs to the archaeal/bacterial/fungal opsin family.

The protein localises to the membrane. Probably cooperates with other heat shock proteins in the translocation of polypeptides through membranes. It may counteract the altering effect of heat shock on the plasma membrane. The polypeptide is 30 kDa heat shock protein (HSP30) (Saccharomyces cerevisiae (strain ATCC 204508 / S288c) (Baker's yeast)).